The primary structure comprises 3106 residues: Probable polyketide synthase 29 (3106 aa).

Over residues 1-11 (MVQNTDNTRNS) the composition is skewed to polar residues. The interval 1–20 (MVQNTDNTRNSKLIRDRNDY) is disordered. The Ketosynthase family 3 (KS3) domain occupies 28–461 (SGDIAVIGIG…GSNVCLILSE (434 aa)). Residues cysteine 200, histidine 339, and histidine 384 each act as for beta-ketoacyl synthase activity in the active site. Residues 661–694 (GVSADIIIGHSLGEVSSPYCSGMIDFQTLCYLTY) are acyl/malonyl transferase. The active-site For acyl/malonyl transferase activity is the serine 671. An N-terminal hotdog fold region spans residues 961–1082 (PSIHGLGNNT…GNFSLTKHNS (122 aa)). The 306-residue stretch at 961 to 1266 (PSIHGLGNNT…CALVSLDSNP (306 aa)) folds into the PKS/mFAS DH domain. Histidine 994 functions as the Proton acceptor; for dehydratase activity in the catalytic mechanism. A C-terminal hotdog fold region spans residues 1099-1266 (NFTSISKQDF…CALVSLDSNP (168 aa)). Residue aspartate 1171 is the Proton donor; for dehydratase activity of the active site. One can recognise a Carrier domain in the interval 2533–2610 (NNNEIIRSTI…QSIEIILSAH (78 aa)). Serine 2570 carries the post-translational modification O-(pantetheine 4'-phosphoryl)serine. Residues 2609-2656 (AHNNNNKNNNNNNNINNNNKNNNNNNNKNNNNINNNINNNKNNNNNNN) are a coiled coil. Residues 2614–2656 (NKNNNNNNNINNNNKNNNNNNNKNNNNINNNINNNKNNNNNNN) form a disordered region.

It depends on pantetheine 4'-phosphate as a cofactor.

Its function is as follows. Probable polyketide synthase. The polypeptide is Probable polyketide synthase 29 (pks29) (Dictyostelium discoideum (Social amoeba)).